The sequence spans 581 residues: MKLLFFLFGLIFAVEQEKPYLDNNRVPVEQILNDHSSAKFDYTYVSVCVNSTDETLLDIVYAKECKNAASRVALGKYSNQVNTTGWGILEIETFASHSYDVQAYGAGVAEGELTRLQIYYHYRNTIETMCNNHTLFCKRLYIYLQQNLDWMRSQVQANPPTDPFWRQVNLTFAQLTGIYDAYSKRNLTPEIGFDLHPIYMMQLAGDMFDLNKLLNKTADPMEYPEGGRCSGFVKLAPGNKDMFMAHVSMSSLSWMQRVLKIYKFGYDVNEVPGHIVTFSGYPGVLISTDDYTITSAGLTSIETTIAIFNQTLYTDKFMKPEGQVHCWIRSMISNLLSRTGKQWVDMFGRYNSGTYNNQWTVLDWKQFTPEKELPDKDVLWISEQTPGYYETRDMTWYLKKYTYFASYNIPFLPKVSEISGFDNKARQFAWFDWGGSPRARIFDRDHSKVTDIDSLTKLMRYNDYTHEEFARCKCTPNPYTGEGGISARGDLNTPGGTYEVESMGFRDHAGLDFKGTNYEMFKKMRFRAWGGPPYDPLPVFDWNHTNLTNVRHFGQPDVWNFTYVDLEWQLAAQVQLTPYDN.

Residues 1-16 (MKLLFFLFGLIFAVEQ) form the signal peptide. Asn50, Asn82, Asn132, Asn169, Asn215, Asn309, Asn543, Asn546, and Asn560 each carry an N-linked (GlcNAc...) asparagine glycan.

The protein belongs to the phospholipase B-like family.

The protein resides in the secreted. Putative phospholipase. The protein is Putative phospholipase B-like 3 of Caenorhabditis elegans.